The chain runs to 1851 residues: Protein lap4 (1851 aa).

LRR repeat units follow at residues 38-59 (TLEELFLDANHIRDLPKNFFRL), 61-82 (RLRKLGLSDNEIGRLPPDIQNF), 84-105 (NLVELDVSRNDIPDIPDDIKHL), 107-128 (SLQVADFSSNPIPKLPSGFSQL), 130-152 (NLTVLGLNDMSLTTLPADFGSLT), 153-174 (QLESLELRENLLKHLPETISQL), 176-197 (KLKRLDLGDNEIEDLPPYLGYL), 199-220 (GLHELWLDHNQLQRLPPELGLL), 222-243 (KLTYLDVSENRLEELPNEISGL), 245-267 (SLTDLDLAQNLLEALPDGIAKLS), 268-289 (RLTILKLDQNRLQRLNDTLGNC), 291-312 (NMQELILTENFLSELPASIGQM), 314-335 (KLNNLNVDRNALEYLPLEIGQC), 337-358 (NLGVLSLRDNKLKKLPPELGNC), 360-382 (VLHVLDVSGNQLLYLPYSLVNLQ), and 383-403 (LKAVWLSENQSQPLLTFQPDT). 3 disordered regions span residues 427–474 (PARD…KDLK), 584–641 (VGGS…VQHL), and 656–719 (SQER…PDNL). Residues S433 and S435 each carry the phosphoserine modification. Residues 438–461 (FEEREPSRTVVKFSEEATQEKETP) show a composition bias toward basic and acidic residues. A coiled-coil region spans residues 471–492 (KDLKAKAQKLKVERSRNEEHAN). The segment covering 589-601 (EVQDDDEQEDEFE) has biased composition (acidic residues). The segment covering 620 to 639 (RPPKLHRRDTPHHLKNKRVQ) has biased composition (basic residues). Residues 656 to 672 (SQERNDTTPQHSLSGKV) are compositionally biased toward polar residues. The segment covering 676–686 (IEEEEQLEVEQ) has biased composition (acidic residues). Residues 677-693 (EEEEQLEVEQEQQQQQQ) adopt a coiled-coil conformation. Phosphoserine occurs at positions 700, 702, and 705. Positions 731–818 (EIHIERTAAG…VLVLVVQREV (88 aa)) constitute a PDZ 1 domain. Phosphoserine occurs at positions 834 and 837. The region spanning 929–1019 (HTTLIRDQIG…FVRLVLQREY (91 aa)) is the PDZ 2 domain. Residues S1031 and S1041 each carry the phosphoserine modification. A disordered region spans residues 1067-1150 (LATTTPTPKP…EAQPSSLRPL (84 aa)). Polar residues-rich tracts occupy residues 1080-1097 (ASISNNNNTLPSSKTNGF) and 1132-1149 (GSTTSGDSGEAQPSSLRP). PDZ domains follow at residues 1239–1329 (EVVL…QHDP) and 1336–1428 (EVLL…CKGY). Positions 1448–1467 (NSSASCSGGSRQGSRASETG) are enriched in polar residues. A disordered region spans residues 1448-1485 (NSSASCSGGSRQGSRASETGSELSQSQSVSSLDHEEDE). Over residues 1468-1478 (SELSQSQSVSS) the composition is skewed to low complexity. Residues S1475, S1477, and S1478 each carry the phosphoserine modification. T1599 bears the Phosphothreonine mark. Residues 1647–1669 (AESANSAGAPSPAVPASTPGSAP) are compositionally biased toward low complexity. 2 disordered regions span residues 1647 to 1751 (AESA…KVFS) and 1772 to 1851 (LRRD…VFRS). The segment covering 1725–1751 (VSDKKRFFESAMEDQHKPTQKTDKVFS) has biased composition (basic and acidic residues). The stretch at 1753-1790 (LSKDEVEKLRQEEERKIATLRRDKNSRLLDAANDNIDK) forms a coiled coil. The segment covering 1807–1816 (DDNDDSDQEE) has biased composition (acidic residues). A compositionally biased stretch (basic and acidic residues) spans 1831 to 1851 (HFDDAEDMRNPLDEIEAVFRS).

The protein belongs to the LAP (LRR and PDZ) protein family. During germ band extension, expression of isoform A occurs predominantly in neuroblasts derived from the neuro-ectoderm and later is restricted to CNS neurons and pole cells. Isoform C is strongly expressed in PNS and a subset of CNS neurons. In the adult, expressed in third antennal segment and maxillary palps, major olfactory organs and in Johnstons organ in the second antennal segment. Expression is also observed in cortical regions of the brain. Isoforms expressed in epithelia are coexpressed with dlg1 throughout development.

It is found in the cytoplasm. The protein resides in the apicolateral cell membrane. The protein localises to the cell junction. It localises to the septate junction. Its function is as follows. Required for polarization of the embryonic, imaginal disk and follicular epithelia. Specifically restricts apical membrane determinants to the apical cell surface; acts to exclude crb from the basolateral domain and define adherens junction position. Regulates cellular growth and differentiation; acts as a tumor suppressor. Essential for odor guided behavior. This is Protein lap4 from Drosophila melanogaster (Fruit fly).